The sequence spans 168 residues: Large ribosomal subunit protein uL10 (168 aa).

It belongs to the universal ribosomal protein uL10 family. As to quaternary structure, part of the ribosomal stalk of the 50S ribosomal subunit. The N-terminus interacts with L11 and the large rRNA to form the base of the stalk. The C-terminus forms an elongated spine to which L12 dimers bind in a sequential fashion forming a multimeric L10(L12)X complex.

Its function is as follows. Forms part of the ribosomal stalk, playing a central role in the interaction of the ribosome with GTP-bound translation factors. The sequence is that of Large ribosomal subunit protein uL10 from Acinetobacter baylyi (strain ATCC 33305 / BD413 / ADP1).